The following is an 819-amino-acid chain: Protein kinase C-binding protein NELL2 (819 aa).

An N-terminal signal peptide occupies residues 1-24 (MHAMESRVLLRTFCVILGLGAVWG). 4 N-linked (GlcNAc...) asparagine glycosylation sites follow: asparagine 56, asparagine 228, asparagine 296, and asparagine 301. A Laminin G-like domain is found at 67–231 (PRSIKASTAT…AQCPDLNRTC (165 aa)). The 60-residue stretch at 275–334 (RTCTVKGTTYRESESWTDGCKNCTCLNGTIQCETLVCPAPDCPPKSAPAYVDGKCCKECK) folds into the VWFC 1 domain. The 43-residue stretch at 400–442 (GYDFCSEKHTCMENSVCRNLNDRAVCSCRDGFRALREDNAYCE) folds into the EGF-like 1 domain. Cystine bridges form between cysteine 404-cysteine 416, cysteine 410-cysteine 425, and cysteine 427-cysteine 441. Residues aspartate 443, isoleucine 444, and glutamate 446 each contribute to the Ca(2+) site. One can recognise an EGF-like 2; calcium-binding domain in the interval 443-484 (DIDECAEGRHYCRENTMCVNTPGSFMCICKTGYIRIDDYSCT). Disulfide bonds link cysteine 447–cysteine 460, cysteine 454–cysteine 469, cysteine 471–cysteine 483, cysteine 489–cysteine 502, cysteine 496–cysteine 511, cysteine 513–cysteine 524, cysteine 528–cysteine 538, cysteine 532–cysteine 544, and cysteine 546–cysteine 555. Residues asparagine 462, threonine 463, and serine 466 each coordinate Ca(2+). Residues 485–525 (EHDECLTNQHNCDENALCFNTVGGHNCVCKPGYTGNGTTCK) enclose the EGF-like 3; calcium-binding domain. Asparagine 520 carries N-linked (GlcNAc...) asparagine glycosylation. In terms of domain architecture, EGF-like 4 spans 526–556 (AFCKDGCRNGGACIAANVCACPQGFTGPSCE). Threonine 551 is a glycosylation site (O-linked (GlcNAc...) threonine). Ca(2+) contacts are provided by aspartate 558, isoleucine 559, and glutamate 561. Residues 558–604 (DIDECSEGFVQCDSRANCINLPGWYHCECRDGYHDNGMFAPGGESCE) form the EGF-like 5; calcium-binding domain. 3 disulfides stabilise this stretch: cysteine 562-cysteine 575, cysteine 569-cysteine 584, and cysteine 586-cysteine 603. Positions 577, 578, and 581 each coordinate Ca(2+). Positions 605, 606, and 608 each coordinate Ca(2+). An EGF-like 6; calcium-binding domain is found at 605–640 (DIDECGTGRHSCTNDTICFNLDGGYDCRCPHGKNCT). 3 cysteine pairs are disulfide-bonded: cysteine 609/cysteine 622, cysteine 616/cysteine 631, and cysteine 633/cysteine 639. N-linked (GlcNAc...) asparagine glycosylation is present at asparagine 618. Asparagine 624, leucine 625, and glycine 628 together coordinate Ca(2+). Asparagine 638 is a glycosylation site (N-linked (GlcNAc...) asparagine). The 59-residue stretch at 701-759 (SQCLHQNGETVYNSGDTWVQDCRQCRCLQGEVDCWPLACPEVECEFSVLPENECCPRCV) folds into the VWFC 2 domain.

Homotrimer. Interacts with NICOL1; this interaction triggers epididymal differentiation. Interacts (via EGF domains) with ROBO3 (via FN domains); binding to ROBO3 induces repulsive guidance cue for commissural axons. In terms of tissue distribution, expressed in brain and testis but not in epididymis. Expressed in regions flanking the commissural axon trajectory, including the ventral horn.

The protein localises to the secreted. Functionally, plays multiple roles in neural tissues, regulates neuronal proliferation, survival, differentiation, polarization, as well as axon guidance and synaptic functions. Plays an important role in axon development during neuronal differentiation through the MAPK intracellular signaling pathway. Via binding to its receptor ROBO3, plays a role in axon guidance, functioning as a repulsive axon guidance cue that contributes to commissural axon guidance to the midline. Required for neuron survival through the modulation of MAPK signaling pathways too. Involved in the regulation of hypothalamic GNRH secretion and the control of puberty. Its function is as follows. Epididymal-secreted protein that signals through a ROS1-pathway to regulate the epididymal initial segment (IS) maturation, sperm maturation and male fertility. This chain is Protein kinase C-binding protein NELL2, found in Mus musculus (Mouse).